Reading from the N-terminus, the 1384-residue chain is DNA-directed RNA polymerase subunit beta' (1384 aa).

Zn(2+)-binding residues include Cys-81, Cys-83, Cys-96, and Cys-99. The Mg(2+) site is built by Asp-472, Asp-474, and Asp-476.

It belongs to the RNA polymerase beta' chain family. In terms of assembly, the RNAP catalytic core consists of 2 alpha, 1 beta, 1 beta' and 1 omega subunit. When a sigma factor is associated with the core the holoenzyme is formed, which can initiate transcription. Mg(2+) is required as a cofactor. It depends on Zn(2+) as a cofactor.

The enzyme catalyses RNA(n) + a ribonucleoside 5'-triphosphate = RNA(n+1) + diphosphate. In terms of biological role, DNA-dependent RNA polymerase catalyzes the transcription of DNA into RNA using the four ribonucleoside triphosphates as substrates. The sequence is that of DNA-directed RNA polymerase subunit beta' from Opitutus terrae (strain DSM 11246 / JCM 15787 / PB90-1).